The primary structure comprises 244 residues: 5-oxoprolinase subunit A (244 aa).

The protein belongs to the LamB/PxpA family. As to quaternary structure, forms a complex composed of PxpA, PxpB and PxpC.

It carries out the reaction 5-oxo-L-proline + ATP + 2 H2O = L-glutamate + ADP + phosphate + H(+). Functionally, catalyzes the cleavage of 5-oxoproline to form L-glutamate coupled to the hydrolysis of ATP to ADP and inorganic phosphate. The chain is 5-oxoprolinase subunit A from Salmonella paratyphi A (strain ATCC 9150 / SARB42).